A 147-amino-acid chain; its full sequence is Large ribosomal subunit protein uL16 (147 aa).

This sequence belongs to the universal ribosomal protein uL16 family. As to quaternary structure, part of the 50S ribosomal subunit.

Its function is as follows. Binds 23S rRNA and is also seen to make contacts with the A and possibly P site tRNAs. The chain is Large ribosomal subunit protein uL16 from Finegoldia magna (strain ATCC 29328 / DSM 20472 / WAL 2508) (Peptostreptococcus magnus).